The sequence spans 237 residues: tRNA(His) guanylyltransferase (237 aa).

N-acetylalanine is present on Ala2. Mg(2+)-binding residues include Asp29 and Gly30. Positions 32, 33, 34, 44, and 47 each coordinate GTP. Asp77 provides a ligand contact to Mg(2+).

Belongs to the tRNA(His) guanylyltransferase family. As to quaternary structure, homotetramer. Mg(2+) is required as a cofactor.

The enzyme catalyses a 5'-end ribonucleotide-tRNA(His) + GTP + ATP + H2O = a 5'-end phospho-guanosine-ribonucleotide-tRNA(His) + AMP + 2 diphosphate + H(+). The catalysed reaction is a 5'-end ribonucleotide-RNA + a ribonucleoside 5'-triphosphate + ATP + H2O = a 5'-end phospho-ribonucleoside-ribonucleotide-RNA + AMP + 2 diphosphate + H(+). Its function is as follows. Acts as a tRNA(His) guanylyltransferase that catalyzes 3'-5' addition of a single guanosine residue to the -1 position of tRNA(His), to form a non-Watson-Crick G(-1):A-73 base pair. After addition of G(-1), THG1 removes pyrophosphate from the tRNA 5'-end, generating 5'-monophosphorylated G(-1)-containing tRNA which is important for recognition of tRNA(His) by its cognate histidyl-tRNA synthetase. In addition to the single-G(-1) addition reaction, THG1 polymerizes multiple G residues to the 5'-end of tRNA(His) variants using the 3'-end of the tRNA(His) acceptor stem as a template. The sequence is that of tRNA(His) guanylyltransferase from Saccharomyces cerevisiae (strain ATCC 204508 / S288c) (Baker's yeast).